A 153-amino-acid chain; its full sequence is Arginine repressor (153 aa).

It belongs to the ArgR family.

The protein localises to the cytoplasm. The protein operates within amino-acid biosynthesis; L-arginine biosynthesis [regulation]. Functionally, regulates arginine biosynthesis genes. This is Arginine repressor from Acetivibrio thermocellus (strain ATCC 27405 / DSM 1237 / JCM 9322 / NBRC 103400 / NCIMB 10682 / NRRL B-4536 / VPI 7372) (Clostridium thermocellum).